The primary structure comprises 503 residues: UDP-N-acetylmuramoylalanine--D-glutamate ligase (503 aa).

Position 129 to 135 (129 to 135 (GTNGKTT)) interacts with ATP.

Belongs to the MurCDEF family.

It localises to the cytoplasm. The enzyme catalyses UDP-N-acetyl-alpha-D-muramoyl-L-alanine + D-glutamate + ATP = UDP-N-acetyl-alpha-D-muramoyl-L-alanyl-D-glutamate + ADP + phosphate + H(+). It participates in cell wall biogenesis; peptidoglycan biosynthesis. Cell wall formation. Catalyzes the addition of glutamate to the nucleotide precursor UDP-N-acetylmuramoyl-L-alanine (UMA). The sequence is that of UDP-N-acetylmuramoylalanine--D-glutamate ligase from Burkholderia multivorans (strain ATCC 17616 / 249).